The sequence spans 843 residues: Glycogen phosphorylase, brain form (843 aa).

Ala-2 bears the N-acetylalanine mark. Ser-15 carries the post-translational modification Phosphoserine; by PHK; in form phosphorylase A. AMP contacts are provided by Asp-43, Tyr-197, and Arg-310. Position 197 is a phosphotyrosine (Tyr-197). Tyr-473 is modified (phosphotyrosine). Residue Ser-524 is modified to Phosphoserine. Pyridoxal 5'-phosphate is bound at residue Lys-569. A pyridoxal 5'-phosphate region spans residues 677–678 (TG). Residue Lys-681 is modified to N6-(pyridoxal phosphate)lysine.

The protein belongs to the glycogen phosphorylase family. As to quaternary structure, homodimer. Dimers associate into a tetramer to form the enzymatically active phosphorylase A. It depends on pyridoxal 5'-phosphate as a cofactor. Phosphorylation of Ser-15 converts phosphorylase B (unphosphorylated) to phosphorylase A.

It carries out the reaction [(1-&gt;4)-alpha-D-glucosyl](n) + phosphate = [(1-&gt;4)-alpha-D-glucosyl](n-1) + alpha-D-glucose 1-phosphate. With respect to regulation, activity of phosphorylase is controlled both by allosteric means (through the non-covalent binding of metabolites) and by covalent modification. Thus AMP allosterically activates, whereas ATP, ADP, and glucose-6-phosphate allosterically inhibit, phosphorylase B. In terms of biological role, glycogen phosphorylase that regulates glycogen mobilization. Phosphorylase is an important allosteric enzyme in carbohydrate metabolism. Enzymes from different sources differ in their regulatory mechanisms and in their natural substrates. However, all known phosphorylases share catalytic and structural properties. This is Glycogen phosphorylase, brain form (Pygb) from Mus musculus (Mouse).